Consider the following 251-residue polypeptide: Osmotin-like protein (251 aa).

Residues 1 to 21 (MSHLTTFLVFFLLAFVTYTYA) form the signal peptide. Cystine bridges form between cysteine 31-cysteine 226, cysteine 73-cysteine 83, cysteine 88-cysteine 94, cysteine 142-cysteine 214, cysteine 147-cysteine 197, cysteine 155-cysteine 165, cysteine 169-cysteine 178, and cysteine 179-cysteine 184. Asparagine 233 carries N-linked (GlcNAc...) asparagine glycosylation.

Belongs to the thaumatin family.

This is Osmotin-like protein (OLPA) from Nicotiana tabacum (Common tobacco).